The chain runs to 205 residues: Putative lipoprotein LppC (205 aa).

The first 27 residues, 1–27 (MESPMTSTLHRTPLATAGLALVVALGG), serve as a signal peptide directing secretion. The N-palmitoyl cysteine moiety is linked to residue Cys-28. Residue Cys-28 is the site of S-diacylglycerol cysteine attachment. The segment at 126–145 (GSTADGQTPAGGHSVPNSGG) is disordered.

The protein belongs to the UPF0098 family.

The protein resides in the cell membrane. The protein is Putative lipoprotein LppC (lppC) of Mycobacterium tuberculosis (strain CDC 1551 / Oshkosh).